The primary structure comprises 380 residues: Putative F-box/kelch-repeat protein At2g44030 (380 aa).

Residues 16 to 66 form the F-box domain; it reads PKSFLSLPYDVVFNCLSRVSRTHDPILSLVSKSFRSLLALPDLEAERFRIL. Kelch repeat units follow at residues 123-170 and 172-219; these read EIYL…VIDG and INVY…ALIK.

This chain is Putative F-box/kelch-repeat protein At2g44030, found in Arabidopsis thaliana (Mouse-ear cress).